Here is a 480-residue protein sequence, read N- to C-terminus: 3-isopropylmalate dehydratase large subunit (480 aa).

C360, C418, and C421 together coordinate [4Fe-4S] cluster.

Belongs to the aconitase/IPM isomerase family. LeuC type 1 subfamily. As to quaternary structure, heterodimer of LeuC and LeuD. [4Fe-4S] cluster is required as a cofactor.

The catalysed reaction is (2R,3S)-3-isopropylmalate = (2S)-2-isopropylmalate. It functions in the pathway amino-acid biosynthesis; L-leucine biosynthesis; L-leucine from 3-methyl-2-oxobutanoate: step 2/4. Catalyzes the isomerization between 2-isopropylmalate and 3-isopropylmalate, via the formation of 2-isopropylmaleate. The protein is 3-isopropylmalate dehydratase large subunit of Anaeromyxobacter dehalogenans (strain 2CP-1 / ATCC BAA-258).